We begin with the raw amino-acid sequence, 445 residues long: MREIVHIQAGQCGNQIGAKFWEVISDEHGIDPTGSYHGDSDLQLERINVYYNEAAGNKYVPRAILVDLEPGTMDSVRSGPFGQIFRPDNFVFGQSGAGNNWAKGHYTEGAELVDSVLDVVRKESESCDCLQGFQLTHSLGGGTGSGMGTLLISKIREEYPDRIMNTFSVMPSPKVSDTVVEPYNATLSVHQLVENTDETYSIDNEALYDICFRTLKLTTPTYGDLNHLVSATMSGVTTCLRFPGQLNADLRKLAVNMVPFPRLHFFMPGFAPLTSRGSQQYRALTVPELTQQMFDSKNMMAACDPRHGRYLTVAAIFRGRMSMKEVDEQMLNVQNKNSSYFVEWIPNNVKTAVCDIPPRGLKMSATFIGNSTAIQELFKRISEQFTAMFRRKAFLHWYTGEGMDEMEFTEAESNMNDLVSEYQQYQDATADEQGEFEEEEGEDEA.

The MREI motif signature appears at 1 to 4; that stretch reads MREI. Glutamine 11 is a GTP binding site. The residue at position 40 (serine 40) is a Phosphoserine. An N6-acetyllysine; alternate modification is found at lysine 58. The residue at position 58 (lysine 58) is an N6-succinyllysine; alternate. Lysine 58 is covalently cross-linked (Glycyl lysine isopeptide (Lys-Gly) (interchain with G-Cter in ubiquitin); alternate). GTP-binding residues include glutamate 69, serine 138, glycine 142, threonine 143, and glycine 144. Residue glutamate 69 coordinates Mg(2+). Position 172 is a phosphoserine; by CDK1 (serine 172). GTP-binding residues include asparagine 204 and asparagine 226. Residues threonine 285 and threonine 290 each carry the phosphothreonine modification. At arginine 318 the chain carries Omega-N-methylarginine. Lysine 324 participates in a covalent cross-link: Glycyl lysine isopeptide (Lys-Gly) (interchain with G-Cter in ubiquitin). The tract at residues 422–445 is disordered; that stretch reads YQQYQDATADEQGEFEEEEGEDEA. Residues 429 to 445 are compositionally biased toward acidic residues; the sequence is TADEQGEFEEEEGEDEA. Position 438 is a 5-glutamyl polyglutamate (glutamate 438).

Belongs to the tubulin family. In terms of assembly, interacts with ZNRF1. Part of a complex composed at least of ASH2L, EMSY, HCFC1, HSPA8, CCAR2, MATR3, MKI67, RBBP5, TUBB2A, WDR5 and ZNF335; this complex may have a histone H3-specific methyltransferase activity. Dimer of alpha and beta chains. A typical microtubule is a hollow water-filled tube with an outer diameter of 25 nm and an inner diameter of 15 nM. Alpha-beta heterodimers associate head-to-tail to form protofilaments running lengthwise along the microtubule wall with the beta-tubulin subunit facing the microtubule plus end conferring a structural polarity. Microtubules usually have 13 protofilaments but different protofilament numbers can be found in some organisms and specialized cells. Mg(2+) is required as a cofactor. Post-translationally, some glutamate residues at the C-terminus are polyglutamylated, resulting in polyglutamate chains on the gamma-carboxyl group. Polyglutamylation plays a key role in microtubule severing by spastin (SPAST). SPAST preferentially recognizes and acts on microtubules decorated with short polyglutamate tails: severing activity by SPAST increases as the number of glutamates per tubulin rises from one to eight, but decreases beyond this glutamylation threshold. Glutamylation is also involved in cilia motility. Some glutamate residues at the C-terminus are monoglycylated but not polyglycylated due to the absence of functional TTLL10 in human. Monoglycylation is mainly limited to tubulin incorporated into cilia and flagella axonemes, which is required for their stability and maintenance. Flagella glycylation controls sperm motility. Both polyglutamylation and monoglycylation can coexist on the same protein on adjacent residues, and lowering glycylation levels increases polyglutamylation, and reciprocally. In terms of processing, phosphorylated on Ser-172 by CDK1 during the cell cycle, from metaphase to telophase, but not in interphase. This phosphorylation inhibits tubulin incorporation into microtubules. As to expression, high expression in brain, where it represents 30% of all beta-tubulins.

It localises to the cytoplasm. The protein resides in the cytoskeleton. In terms of biological role, tubulin is the major constituent of microtubules, a cylinder consisting of laterally associated linear protofilaments composed of alpha- and beta-tubulin heterodimers. Microtubules grow by the addition of GTP-tubulin dimers to the microtubule end, where a stabilizing cap forms. Below the cap, tubulin dimers are in GDP-bound state, owing to GTPase activity of alpha-tubulin. This is Tubulin beta-2A chain (TUBB2A) from Homo sapiens (Human).